The following is a 298-amino-acid chain: ATP synthase gamma chain (298 aa).

This sequence belongs to the ATPase gamma chain family. As to quaternary structure, F-type ATPases have 2 components, CF(1) - the catalytic core - and CF(0) - the membrane proton channel. CF(1) has five subunits: alpha(3), beta(3), gamma(1), delta(1), epsilon(1). CF(0) has three main subunits: a, b and c.

It localises to the cell inner membrane. Produces ATP from ADP in the presence of a proton gradient across the membrane. The gamma chain is believed to be important in regulating ATPase activity and the flow of protons through the CF(0) complex. The polypeptide is ATP synthase gamma chain (Acidithiobacillus ferridurans).